A 46-amino-acid polypeptide reads, in one-letter code: Mu-hexatoxin-Mg2a (46 aa).

Intrachain disulfides connect cysteine 3-cysteine 18, cysteine 10-cysteine 24, cysteine 17-cysteine 36, cysteine 21-cysteine 43, and cysteine 26-cysteine 34.

It belongs to the neurotoxin 02 (plectoxin) family. 02 (plectoxin) subfamily. In terms of tissue distribution, expressed by the venom gland.

It is found in the secreted. Competes for binding at site 3 of the insect voltage-gated sodium channel (Nav). Insecticidal neurotoxin. Causes temporary paralysis to lepidopteran larvae (10.3 nmol/g) or to crickets (doses from 0.93 to 119 ug/g). Is not toxic to mice when injected intracranially (high doses). The chain is Mu-hexatoxin-Mg2a from Macrothele gigas (Japanese funnel web spider).